A 293-amino-acid polypeptide reads, in one-letter code: Fructose-bisphosphate aldolase (293 aa).

Residue serine 50 participates in D-glyceraldehyde 3-phosphate binding. The active-site Proton donor is the aspartate 85. Histidine 86, aspartate 106, glutamate 136, and histidine 178 together coordinate Zn(2+). Glycine 179 is a binding site for dihydroxyacetone phosphate. Histidine 208 provides a ligand contact to Zn(2+). Dihydroxyacetone phosphate-binding positions include 209-211 (GGS) and 230-233 (NVNT).

It belongs to the class II fructose-bisphosphate aldolase family. Zn(2+) is required as a cofactor.

It catalyses the reaction beta-D-fructose 1,6-bisphosphate = D-glyceraldehyde 3-phosphate + dihydroxyacetone phosphate. Its pathway is carbohydrate degradation; glycolysis; D-glyceraldehyde 3-phosphate and glycerone phosphate from D-glucose: step 4/4. In terms of biological role, catalyzes the aldol condensation of dihydroxyacetone phosphate (DHAP or glycerone-phosphate) with glyceraldehyde 3-phosphate (G3P) to form fructose 1,6-bisphosphate (FBP) in gluconeogenesis and the reverse reaction in glycolysis. The sequence is that of Fructose-bisphosphate aldolase (fba) from Streptococcus pyogenes serotype M1.